The following is a 101-amino-acid chain: Protein Tat (101 aa).

The tract at residues 1–24 (MEPVDPNREPWNHPGSQPKTACTN) is interaction with human CREBBP. Positions 1–48 (MEPVDPNREPWNHPGSQPKTACTNCYCKKCCYHCQVCFLQKGLGISYG) are transactivation. Zn(2+)-binding residues include cysteine 22, cysteine 25, and cysteine 27. A cysteine-rich region spans residues 22–37 (CTNCYCKKCCYHCQVC). N6-acetyllysine; by host PCAF is present on lysine 28. Zn(2+) is bound by residues cysteine 30, histidine 33, cysteine 34, and cysteine 37. The tract at residues 38-48 (FLQKGLGISYG) is core. Residues 48–101 (GRKKRRQRRSAPPGSKNHQDLIPEQPLFQTQRKPTGPEESKKEVESKAEPDRFD) are disordered. Residues 49 to 57 (RKKRRQRRS) carry the Nuclear localization signal, RNA-binding (TAR), and protein transduction motif. The tract at residues 49–86 (RKKRRQRRSAPPGSKNHQDLIPEQPLFQTQRKPTGPEE) is interaction with the host capping enzyme RNGTT. 2 positions are modified to N6-acetyllysine; by host EP300 and GCN5L2: lysine 50 and lysine 51. 2 positions are modified to asymmetric dimethylarginine; by host PRMT6: arginine 52 and arginine 53. The segment covering 82-101 (TGPEESKKEVESKAEPDRFD) has biased composition (basic and acidic residues).

It belongs to the lentiviruses Tat family. Interacts with host CCNT1. Associates with the P-TEFb complex composed at least of Tat, P-TEFb (CDK9 and CCNT1), TAR RNA, RNA Pol II. Recruits the HATs CREBBP, TAF1/TFIID, EP300, PCAF and GCN5L2. Interacts with host KAT5/Tip60; this interaction targets the latter to degradation. Interacts with the host deacetylase SIRT1. Interacts with host capping enzyme RNGTT; this interaction stimulates RNGTT. Binds to host KDR, and to the host integrins ITGAV/ITGB3 and ITGA5/ITGB1. Interacts with host KPNB1/importin beta-1 without previous binding to KPNA1/importin alpha-1. Interacts with EIF2AK2. Interacts with host nucleosome assembly protein NAP1L1; this interaction may be required for the transport of Tat within the nucleus, since the two proteins interact at the nuclear rim. Interacts with host C1QBP/SF2P32; this interaction involves lysine-acetylated Tat. Interacts with the host chemokine receptors CCR2, CCR3 and CXCR4. Interacts with host DPP4/CD26; this interaction may trigger an anti-proliferative effect. Interacts with host LDLR. Interacts with the host extracellular matrix metalloproteinase MMP1. Interacts with host PRMT6; this interaction mediates Tat's methylation. Interacts with, and is ubiquitinated by MDM2/Hdm2. Interacts with host PSMC3 and HTATIP2. Interacts with STAB1; this interaction may overcome SATB1-mediated repression of IL2 and IL2RA (interleukin) in T cells by binding to the same domain than HDAC1. Interacts (when acetylated) with human CDK13, thereby increasing HIV-1 mRNA splicing and promoting the production of the doubly spliced HIV-1 protein Nef. Interacts with host TBP; this interaction modulates the activity of transcriptional pre-initiation complex. Interacts with host RELA. Interacts with host PLSCR1; this interaction negatively regulates Tat transactivation activity by altering its subcellular distribution. In terms of processing, asymmetrical arginine methylation by host PRMT6 seems to diminish the transactivation capacity of Tat and affects the interaction with host CCNT1. Post-translationally, acetylation by EP300, CREBBP, GCN5L2/GCN5 and PCAF regulates the transactivation activity of Tat. EP300-mediated acetylation of Lys-50 promotes dissociation of Tat from the TAR RNA through the competitive binding to PCAF's bromodomain. In addition, the non-acetylated Tat's N-terminus can also interact with PCAF. PCAF-mediated acetylation of Lys-28 enhances Tat's binding to CCNT1. Lys-50 is deacetylated by SIRT1. Polyubiquitination by host MDM2 does not target Tat to degradation, but activates its transactivation function and fosters interaction with CCNT1 and TAR RNA. In terms of processing, phosphorylated by EIF2AK2 on serine and threonine residues adjacent to the basic region important for TAR RNA binding and function. Phosphorylation of Tat by EIF2AK2 is dependent on the prior activation of EIF2AK2 by dsRNA.

The protein localises to the host nucleus. It localises to the host nucleolus. The protein resides in the host cytoplasm. It is found in the secreted. Functionally, transcriptional activator that increases RNA Pol II processivity, thereby increasing the level of full-length viral transcripts. Recognizes a hairpin structure at the 5'-LTR of the nascent viral mRNAs referred to as the transactivation responsive RNA element (TAR) and recruits the cyclin T1-CDK9 complex (P-TEFb complex) that will in turn hyperphosphorylate the RNA polymerase II to allow efficient elongation. The CDK9 component of P-TEFb and other Tat-activated kinases hyperphosphorylate the C-terminus of RNA Pol II that becomes stabilized and much more processive. Other factors such as HTATSF1/Tat-SF1, SUPT5H/SPT5, and HTATIP2 are also important for Tat's function. Besides its effect on RNA Pol II processivity, Tat induces chromatin remodeling of proviral genes by recruiting the histone acetyltransferases (HATs) CREBBP, EP300 and PCAF to the chromatin. This also contributes to the increase in proviral transcription rate, especially when the provirus integrates in transcriptionally silent region of the host genome. To ensure maximal activation of the LTR, Tat mediates nuclear translocation of NF-kappa-B by interacting with host RELA. Through its interaction with host TBP, Tat may also modulate transcription initiation. Tat can reactivate a latently infected cell by penetrating in it and transactivating its LTR promoter. In the cytoplasm, Tat is thought to act as a translational activator of HIV-1 mRNAs. Its function is as follows. Extracellular circulating Tat can be endocytosed by surrounding uninfected cells via the binding to several surface receptors such as CD26, CXCR4, heparan sulfate proteoglycans (HSPG) or LDLR. Neurons are rarely infected, but they internalize Tat via their LDLR. Through its interaction with nuclear HATs, Tat is potentially able to control the acetylation-dependent cellular gene expression. Modulates the expression of many cellular genes involved in cell survival, proliferation or in coding for cytokines or cytokine receptors. Tat plays a role in T-cell and neurons apoptosis. Tat induced neurotoxicity and apoptosis probably contribute to neuroAIDS. Circulating Tat also acts as a chemokine-like and/or growth factor-like molecule that binds to specific receptors on the surface of the cells, affecting many cellular pathways. In the vascular system, Tat binds to ITGAV/ITGB3 and ITGA5/ITGB1 integrins dimers at the surface of endothelial cells and competes with bFGF for heparin-binding sites, leading to an excess of soluble bFGF. The protein is Protein Tat of Human immunodeficiency virus type 1 group M subtype J (isolate SE9173) (HIV-1).